We begin with the raw amino-acid sequence, 694 residues long: Elongation factor G (694 aa).

Residues 10–285 form the tr-type G domain; it reads EKTRNIGIMA…AVLDYLPSPV (276 aa). GTP-binding positions include 19–26, 83–87, and 137–140; these read AHIDAGKT, DTPGH, and NKMD.

Belongs to the TRAFAC class translation factor GTPase superfamily. Classic translation factor GTPase family. EF-G/EF-2 subfamily.

The protein resides in the cytoplasm. Its function is as follows. Catalyzes the GTP-dependent ribosomal translocation step during translation elongation. During this step, the ribosome changes from the pre-translocational (PRE) to the post-translocational (POST) state as the newly formed A-site-bound peptidyl-tRNA and P-site-bound deacylated tRNA move to the P and E sites, respectively. Catalyzes the coordinated movement of the two tRNA molecules, the mRNA and conformational changes in the ribosome. The sequence is that of Elongation factor G from Limosilactobacillus fermentum (strain NBRC 3956 / LMG 18251) (Lactobacillus fermentum).